Reading from the N-terminus, the 90-residue chain is Barrier-to-autointegration factor-like protein (90 aa).

Homodimer. Heterodimerizes with BANF1.

Its subcellular location is the nucleus. It localises to the cytoplasm. Its function is as follows. May play a role in BANF1 regulation and influence tissue-specific roles of BANF1. The protein is Barrier-to-autointegration factor-like protein (Banf2) of Mus musculus (Mouse).